A 244-amino-acid chain; its full sequence is Electron transfer flavoprotein beta subunit lysine methyltransferase homolog (244 aa).

Belongs to the methyltransferase superfamily. ETFBKMT family.

In terms of biological role, probable methyltransferase. In Caenorhabditis elegans, this protein is Electron transfer flavoprotein beta subunit lysine methyltransferase homolog.